Consider the following 840-residue polypeptide: Protein translocase subunit SecA (840 aa).

ATP contacts are provided by residues glutamine 87, 105-109 (GEGKT), and aspartate 494. The interval 518–537 (RRIDNQLRGRSGRQGDPGSS) is disordered. Residues cysteine 826, cysteine 828, cysteine 837, and cysteine 838 each contribute to the Zn(2+) site.

It belongs to the SecA family. Monomer and homodimer. Part of the essential Sec protein translocation apparatus which comprises SecA, SecYEG and auxiliary proteins SecDF-YajC and YidC. It depends on Zn(2+) as a cofactor.

It is found in the cell inner membrane. Its subcellular location is the cytoplasm. It carries out the reaction ATP + H2O + cellular proteinSide 1 = ADP + phosphate + cellular proteinSide 2.. Functionally, part of the Sec protein translocase complex. Interacts with the SecYEG preprotein conducting channel. Has a central role in coupling the hydrolysis of ATP to the transfer of proteins into and across the cell membrane, serving as an ATP-driven molecular motor driving the stepwise translocation of polypeptide chains across the membrane. In Desulforapulum autotrophicum (strain ATCC 43914 / DSM 3382 / VKM B-1955 / HRM2) (Desulfobacterium autotrophicum), this protein is Protein translocase subunit SecA.